Reading from the N-terminus, the 1319-residue chain is MQAQQLPYEFFSEENAPKWRGLLVPALKKVQGQVHPTLESNDDALQYVEELILQLLNMLCQAQPRSASDVEERVQKSFPHPIDKWAIADAQSAIEKRKRRNPLSLPAERIHHLLREVLGYKIDHQVSVYIVAVLEYISADILKLVGNYVRNIRHYEITKQDIKVAMCADKVLMDMFHQDVEDINILSLTDEEPSTSGEQTYYDLVKAFMAEIRQYIRELNLIIKVFREPFVSNSKLFSSNDVENIFSRIVDIHELSVKLLGHIEDTVEMTDEGSPHPLVGSCFEDLAEELAFDPYESYARDILRPGFHGHFLSQLSKPGAALYLQSIGEGFKEAVQYVLPRLLLAPVYHCLHYFELLKQLEEKSEDQEDKECMKQAITALLNVQSGMEKICSKSLAKRRLSESACRFYSQQMKGKQLAIKKMNEIQKNIDGWEGKDIGQCCNEFIMEGTLTRVGAKHERHIFLFDGLMICCKSNHGQPRLPGASSAEYRLKEKFFMRKVQINDKDDTSEYKHAFEIILKDGNSVIFSAKSAEEKNNWMAALISLQYRSTLERMLDVTVLQEEKEEQMRLPSAEVYRFAEPDSEENILFEENVQPKAGIPIIKAGTVLKLIERLTYHMYADPNFVRTFLTTYRSFCRPQELLSLLIERFEIPEPEPTEADRIAIENGDQPLSAELKRFRKEYIQPVQLRVLNVCRHWVEHHFYDFERDADLLQRMEEFIGTVRGKAMKKWVESITKIIQRKKIARDNGPGHNITFQSSPPTVEWHISRPGHIETFDLLTLHPIEIARQLTLLESDLYRAVQPSELVGSVWTKEDKEINSPNLLKMIRHTTNLTLWFEKCIVETENLEERVAVVSRIIEILQVFQELNNFNGVLEVVSAMNSSPVYRLDHTFEQIPSRQKKILEEAHELSEDHYKKYLAKLRSINPPCVPFFGIYLTNILKTEEGNPEVLRRHGKELINFSKRRRVAEITGEIQQYQNQPYCLRVEPDIKRFFENLNPMGNSMEKEFTDYLFNKSLEIEPRHPKPLPRFPKKYSYPLKSPGVRPSNPRPGTMRHPTPLQQEPRKISYSRIPESETESTASAPNSPRTPLTPPPASGTSSNTDVCSVFDSDHSASPFHSRSASVSSISLSKGTDEVPVPPPVPPRRRPESAPAESSPSKIMSKHLDSPPAIPPRQPTSKAYSPRYSISDRTSISDPPESPPLLPPREPVRTPDVFSSSPLHLQPPPLGKKSDHGNAFFPNSPSPFTPPPPQTPSPHGTRRHLPSPPLTQEMDLHSIAGPPVPPRQSTSQLIPKLPPKTYKREHTHPSMHRDGPPLLENAHSS.

The 191-residue stretch at Thr-200–Ile-390 folds into the DH domain. The region spanning Phe-444–Ser-548 is the PH domain. Residues Gly-597 to Lys-741 form the N-terminal Ras-GEF domain. The Ras-GEF domain maps to His-780 to Arg-1019. The disordered stretch occupies residues Arg-1019–Val-1101. Phosphoserine occurs at positions 1078 and 1082. Ser-1120 and Ser-1147 each carry phosphoserine; by RPS6KA3. Residues Val-1121–Ser-1319 are disordered. 3 positions are modified to phosphoserine: Ser-1164, Ser-1196, and Ser-1215. The segment covering Pro-1194–Arg-1203 has biased composition (pro residues). Over residues Ser-1238–Pro-1250 the composition is skewed to pro residues. Ser-1261 bears the Phosphoserine mark. Residues Tyr-1296–Gly-1309 are compositionally biased toward basic and acidic residues.

In terms of assembly, interacts (via C-terminus) with GRB2 (via SH3 domain). Forms a complex with phosphorylated MUC1 and GRB2 (via its SH3 domains). Interacts with phosphorylated LAT2. Interacts with NCK1 and NCK2. Part of a complex consisting of ABI1, EPS8 and SOS1. Interacts (Ser-1120 and Ser-1147 phosphorylated form) with YWHAB and YWHAE. In terms of processing, phosphorylation at Ser-1120 and Ser-1147 by RPS6KA3 create YWHAB and YWHAE binding sites and which contribute to the negative regulation of EGF-induced MAPK1/3 phosphorylation. Expressed in most embryonic and adult tissues.

Functionally, promotes the exchange of Ras-bound GDP by GTP. Probably by promoting Ras activation, regulates phosphorylation of MAP kinase MAPK3 in response to EGF. Catalytic component of a trimeric complex that participates in transduction of signals from Ras to Rac by promoting the Rac-specific guanine nucleotide exchange factor (GEF) activity. The polypeptide is Son of sevenless homolog 1 (Sos1) (Mus musculus (Mouse)).